The sequence spans 292 residues: Mycothiol acetyltransferase (292 aa).

N-acetyltransferase domains follow at residues 13 to 168 (ALDR…KWLQ) and 159 to 292 (KSVA…VYEK). Glu-40 lines the 1D-myo-inositol 2-(L-cysteinylamino)-2-deoxy-alpha-D-glucopyranoside pocket. An acetyl-CoA-binding site is contributed by 77-79 (LAV). The 1D-myo-inositol 2-(L-cysteinylamino)-2-deoxy-alpha-D-glucopyranoside site is built by Glu-179, Lys-218, and Glu-226. Acetyl-CoA is bound by residues 230–232 (VGL) and 237–243 (RGRGLGD). Residue Tyr-264 participates in 1D-myo-inositol 2-(L-cysteinylamino)-2-deoxy-alpha-D-glucopyranoside binding.

The protein belongs to the acetyltransferase family. MshD subfamily. As to quaternary structure, monomer.

It carries out the reaction 1D-myo-inositol 2-(L-cysteinylamino)-2-deoxy-alpha-D-glucopyranoside + acetyl-CoA = mycothiol + CoA + H(+). Catalyzes the transfer of acetyl from acetyl-CoA to desacetylmycothiol (Cys-GlcN-Ins) to form mycothiol. This Corynebacterium glutamicum (strain R) protein is Mycothiol acetyltransferase.